We begin with the raw amino-acid sequence, 234 residues long: 3,4-dihydroxy-2-butanone 4-phosphate synthase (234 aa).

D-ribulose 5-phosphate-binding positions include 39 to 40 (RE), Asp44, 152 to 156 (RRGHT), and Glu176. Glu40 is a binding site for Mg(2+). His155 is a Mg(2+) binding site.

The protein belongs to the DHBP synthase family. In terms of assembly, homodimer. It depends on Mg(2+) as a cofactor. Mn(2+) serves as cofactor.

The enzyme catalyses D-ribulose 5-phosphate = (2S)-2-hydroxy-3-oxobutyl phosphate + formate + H(+). It participates in cofactor biosynthesis; riboflavin biosynthesis; 2-hydroxy-3-oxobutyl phosphate from D-ribulose 5-phosphate: step 1/1. Its function is as follows. Catalyzes the conversion of D-ribulose 5-phosphate to formate and 3,4-dihydroxy-2-butanone 4-phosphate. The polypeptide is 3,4-dihydroxy-2-butanone 4-phosphate synthase (Pelobacter propionicus (strain DSM 2379 / NBRC 103807 / OttBd1)).